Reading from the N-terminus, the 85-residue chain is RNA-binding protein Hfq (85 aa).

In terms of domain architecture, Sm spans 9–68 (DPFLNELRKEKVPVSVFLVNGIKLHGIIDSFDQYVVMLKNSITQMVYKHAISTVVPSRMV).

Belongs to the Hfq family. As to quaternary structure, homohexamer.

Its function is as follows. RNA chaperone that binds small regulatory RNA (sRNAs) and mRNAs to facilitate mRNA translational regulation in response to envelope stress, environmental stress and changes in metabolite concentrations. Also binds with high specificity to tRNAs. In Legionella pneumophila (strain Paris), this protein is RNA-binding protein Hfq.